The chain runs to 242 residues: Orotidine 5'-phosphate decarboxylase (242 aa).

Substrate-binding positions include Asp16, Lys37, 64-73 (DLKFHDIPNT), Thr128, Arg190, Gln199, Gly219, and Arg220. Lys66 functions as the Proton donor in the catalytic mechanism.

This sequence belongs to the OMP decarboxylase family. Type 1 subfamily. Homodimer.

The catalysed reaction is orotidine 5'-phosphate + H(+) = UMP + CO2. It participates in pyrimidine metabolism; UMP biosynthesis via de novo pathway; UMP from orotate: step 2/2. In terms of biological role, catalyzes the decarboxylation of orotidine 5'-monophosphate (OMP) to uridine 5'-monophosphate (UMP). The polypeptide is Orotidine 5'-phosphate decarboxylase (Prochlorococcus marinus (strain MIT 9215)).